Reading from the N-terminus, the 61-residue chain is MHMASKKLTRFERARLIGARALQISMGARPLVEIKESLDPVDIARKELEKKVMPLDVRRDK.

Belongs to the archaeal Rpo6/eukaryotic RPB6 RNA polymerase subunit family. Part of the RNA polymerase complex.

It is found in the cytoplasm. It carries out the reaction RNA(n) + a ribonucleoside 5'-triphosphate = RNA(n+1) + diphosphate. In terms of biological role, DNA-dependent RNA polymerase (RNAP) catalyzes the transcription of DNA into RNA using the four ribonucleoside triphosphates as substrates. This Methanothermobacter thermautotrophicus (strain ATCC 29096 / DSM 1053 / JCM 10044 / NBRC 100330 / Delta H) (Methanobacterium thermoautotrophicum) protein is DNA-directed RNA polymerase subunit Rpo6.